The following is a 69-amino-acid chain: DNA gyrase inhibitor YacG (69 aa).

Positions 9, 12, 28, and 32 each coordinate Zn(2+). The tract at residues 48–69 is disordered; sequence PVSPDAEDELFSGDLEAPHRGH.

This sequence belongs to the DNA gyrase inhibitor YacG family. As to quaternary structure, interacts with GyrB. It depends on Zn(2+) as a cofactor.

Its function is as follows. Inhibits all the catalytic activities of DNA gyrase by preventing its interaction with DNA. Acts by binding directly to the C-terminal domain of GyrB, which probably disrupts DNA binding by the gyrase. This chain is DNA gyrase inhibitor YacG, found in Pseudomonas syringae pv. syringae (strain B728a).